We begin with the raw amino-acid sequence, 487 residues long: Bifunctional protein GlmU (487 aa).

A pyrophosphorylase region spans residues 1 to 232 (MAVIVLAAGA…AAELAGVNDR (232 aa)). UDP-N-acetyl-alpha-D-glucosamine contacts are provided by residues 6–9 (LAAG), lysine 20, glutamine 77, and 82–83 (GT). Aspartate 107 contributes to the Mg(2+) binding site. Residues glycine 142, glutamate 157, asparagine 172, and asparagine 230 each coordinate UDP-N-acetyl-alpha-D-glucosamine. Asparagine 230 serves as a coordination point for Mg(2+). The segment at 233 to 253 (VQLAAAGAELNRRTVTAAMRG) is linker. Residues 254–487 (GATIVDPATT…PTSTPQADQE (234 aa)) are N-acetyltransferase. Residues arginine 335 and lysine 353 each contribute to the UDP-N-acetyl-alpha-D-glucosamine site. The Proton acceptor role is filled by histidine 365. UDP-N-acetyl-alpha-D-glucosamine-binding residues include tyrosine 368 and asparagine 379. Residues alanine 382, 388 to 389 (NY), serine 407, and alanine 425 contribute to the acetyl-CoA site. The disordered stretch occupies residues 453–487 (AKKRPGTPAAEAGEAAAKRVAEGGSPTSTPQADQE). Positions 477–487 (SPTSTPQADQE) are enriched in polar residues.

In the N-terminal section; belongs to the N-acetylglucosamine-1-phosphate uridyltransferase family. It in the C-terminal section; belongs to the transferase hexapeptide repeat family. Homotrimer. Mg(2+) serves as cofactor.

Its subcellular location is the cytoplasm. It catalyses the reaction alpha-D-glucosamine 1-phosphate + acetyl-CoA = N-acetyl-alpha-D-glucosamine 1-phosphate + CoA + H(+). It carries out the reaction N-acetyl-alpha-D-glucosamine 1-phosphate + UTP + H(+) = UDP-N-acetyl-alpha-D-glucosamine + diphosphate. It functions in the pathway nucleotide-sugar biosynthesis; UDP-N-acetyl-alpha-D-glucosamine biosynthesis; N-acetyl-alpha-D-glucosamine 1-phosphate from alpha-D-glucosamine 6-phosphate (route II): step 2/2. The protein operates within nucleotide-sugar biosynthesis; UDP-N-acetyl-alpha-D-glucosamine biosynthesis; UDP-N-acetyl-alpha-D-glucosamine from N-acetyl-alpha-D-glucosamine 1-phosphate: step 1/1. Its pathway is bacterial outer membrane biogenesis; LPS lipid A biosynthesis. Its function is as follows. Catalyzes the last two sequential reactions in the de novo biosynthetic pathway for UDP-N-acetylglucosamine (UDP-GlcNAc). The C-terminal domain catalyzes the transfer of acetyl group from acetyl coenzyme A to glucosamine-1-phosphate (GlcN-1-P) to produce N-acetylglucosamine-1-phosphate (GlcNAc-1-P), which is converted into UDP-GlcNAc by the transfer of uridine 5-monophosphate (from uridine 5-triphosphate), a reaction catalyzed by the N-terminal domain. The polypeptide is Bifunctional protein GlmU (Corynebacterium jeikeium (strain K411)).